We begin with the raw amino-acid sequence, 436 residues long: 3-ketoacyl-CoA thiolase (436 aa).

Cys99 serves as the catalytic Acyl-thioester intermediate. Catalysis depends on proton acceptor residues His392 and Cys422.

The protein belongs to the thiolase-like superfamily. Thiolase family. Heterotetramer of two alpha chains (FadJ) and two beta chains (FadI).

The protein resides in the cytoplasm. It carries out the reaction an acyl-CoA + acetyl-CoA = a 3-oxoacyl-CoA + CoA. It functions in the pathway lipid metabolism; fatty acid beta-oxidation. Catalyzes the final step of fatty acid oxidation in which acetyl-CoA is released and the CoA ester of a fatty acid two carbons shorter is formed. The sequence is that of 3-ketoacyl-CoA thiolase from Escherichia coli O127:H6 (strain E2348/69 / EPEC).